The sequence spans 347 residues: Phenylalanine--tRNA ligase alpha subunit (347 aa).

The disordered stretch occupies residues Gln-83–Ile-111. Residue Glu-274 coordinates Mg(2+).

It belongs to the class-II aminoacyl-tRNA synthetase family. Phe-tRNA synthetase alpha subunit type 1 subfamily. In terms of assembly, tetramer of two alpha and two beta subunits. Mg(2+) serves as cofactor.

It localises to the cytoplasm. The catalysed reaction is tRNA(Phe) + L-phenylalanine + ATP = L-phenylalanyl-tRNA(Phe) + AMP + diphosphate + H(+). The sequence is that of Phenylalanine--tRNA ligase alpha subunit from Rhodopirellula baltica (strain DSM 10527 / NCIMB 13988 / SH1).